The chain runs to 457 residues: Fibrinogen C domain-containing protein 1-A (457 aa).

The tract at residues M1–Q20 is disordered. Topologically, residues M1 to C33 are cytoplasmic. Residues T34–M54 form a helical; Signal-anchor for type II membrane protein membrane-spanning segment. Residues N55–N457 lie on the Extracellular side of the membrane. Positions A216 to S235 are disordered. The region spanning C231 to R454 is the Fibrinogen C-terminal domain. An N-linked (GlcNAc...) asparagine glycan is attached at N233. Residues C240 and C269 are joined by a disulfide bond. Residue N336 is glycosylated (N-linked (GlcNAc...) asparagine). Ca(2+) is bound by residues D389 and D391. Cysteines 397 and 410 form a disulfide.

As to quaternary structure, homotetramer; disulfide-linked.

It localises to the membrane. Its function is as follows. Acetyl group-binding receptor which shows a calcium-dependent binding to acetylated structures such as chitin, some N-acetylated carbohydrates, and amino acids. This is Fibrinogen C domain-containing protein 1-A (fibcd1-a) from Xenopus laevis (African clawed frog).